The following is a 183-amino-acid chain: Ribosome maturation factor RimM (183 aa).

The PRC barrel domain maps to 96 to 171; the sequence is PDEFYDHELE…VALIDPPEGL (76 aa).

This sequence belongs to the RimM family. In terms of assembly, binds ribosomal protein uS19.

The protein localises to the cytoplasm. Its function is as follows. An accessory protein needed during the final step in the assembly of 30S ribosomal subunit, possibly for assembly of the head region. Essential for efficient processing of 16S rRNA. May be needed both before and after RbfA during the maturation of 16S rRNA. It has affinity for free ribosomal 30S subunits but not for 70S ribosomes. This Rhodococcus jostii (strain RHA1) protein is Ribosome maturation factor RimM.